The chain runs to 225 residues: Respiratory nitrate reductase 1 gamma chain (225 aa).

Met1 carries the N-formylmethionine modification. Residues 1 to 3 lie on the Periplasmic side of the membrane; that stretch reads MQF. A helical transmembrane segment spans residues 4-29; sequence LNMFFFDIYPYIAGAVFLIGSWLRYD. Over 30–47 the chain is Cytoplasmic; that stretch reads YGQYTWRAASSQMLDRKG. Residues 48 to 70 form a helical membrane-spanning segment; that stretch reads MNLASNLFHIGILGIFVGHFFGM. His56 and His66 together coordinate heme b. Over 71 to 82 the chain is Periplasmic; it reads LTPHWMYEAWLP. The helical transmembrane segment at 83-112 threads the bilayer; that stretch reads IEVKQKMAMFAGGASGVLCLIGGVLLLKRR. Over 113-124 the chain is Cytoplasmic; that stretch reads LFSPRVRATTTG. Residues 125-148 traverse the membrane as a helical segment; it reads ADILILSLLVIQCALGLLTIPFSA. At 149-182 the chain is on the periplasmic side; that stretch reads QHMDGSEMMKLVGWAQSVVTFHGGASQHLDGVAF. A helical transmembrane segment spans residues 183 to 198; it reads IFRLHLVLGMTLFLLF. 2 residues coordinate heme b: His187 and His205. The Cytoplasmic segment spans residues 199-225; sequence PFSRLIHIWSVPVEYLTRKYQLVRARH.

Dimer of heterotrimers each composed of an alpha, a beta and a gamma chain. Alpha and beta are catalytic chains; gamma chains are involved in binding the enzyme complex to the cytoplasmic membrane. It depends on heme as a cofactor.

The protein resides in the cell inner membrane. It catalyses the reaction nitrate + a quinol = a quinone + nitrite + H2O. In terms of biological role, the nitrate reductase enzyme complex allows E.coli to use nitrate as an electron acceptor during anaerobic growth. The gamma chain is a membrane-embedded heme-iron unit resembling cytochrome b, which transfers electrons from quinones to the beta subunit. In Escherichia coli (strain K12), this protein is Respiratory nitrate reductase 1 gamma chain (narI).